Consider the following 215-residue polypeptide: 3,4-dihydroxy-2-butanone 4-phosphate synthase (215 aa).

D-ribulose 5-phosphate is bound by residues 38–39, D43, 151–155, and E175; these read RE and RRGHT. E39 is a binding site for Mg(2+). Residue H154 coordinates Mg(2+).

Belongs to the DHBP synthase family. In terms of assembly, homodimer. Mg(2+) serves as cofactor. The cofactor is Mn(2+).

It carries out the reaction D-ribulose 5-phosphate = (2S)-2-hydroxy-3-oxobutyl phosphate + formate + H(+). It functions in the pathway cofactor biosynthesis; riboflavin biosynthesis; 2-hydroxy-3-oxobutyl phosphate from D-ribulose 5-phosphate: step 1/1. Catalyzes the conversion of D-ribulose 5-phosphate to formate and 3,4-dihydroxy-2-butanone 4-phosphate. The sequence is that of 3,4-dihydroxy-2-butanone 4-phosphate synthase from Haemophilus influenzae (strain PittEE).